The chain runs to 496 residues: Catalase isozyme 3 (496 aa).

The segment at 1–25 (MTMDPTKFRPSSSHDTTVTTTNAGA) is disordered. The span at 9–23 (RPSSSHDTTVTTTNA) shows a compositional bias: polar residues. Catalysis depends on residues His-67 and Asn-140. A heme-binding site is contributed by Tyr-351. Residues 402–422 (PLRQAAPPTPLPPRPVAGRRE) form a disordered region.

The protein belongs to the catalase family. Homotetramer. The cofactor is heme. As to expression, leaf mesophyll cells, pericarp, seedling roots and the coleoptile.

The protein localises to the mitochondrion. The catalysed reaction is 2 H2O2 = O2 + 2 H2O. Its function is as follows. Occurs in almost all aerobically respiring organisms and serves to protect cells from the toxic effects of hydrogen peroxide. Its levels are highest in the light period and are lowest in the dark period, hence it may be important for scavenging hydrogen peroxide at night, rather than during the day. The protein is Catalase isozyme 3 (CAT3) of Zea mays (Maize).